Reading from the N-terminus, the 224-residue chain is Large ribosomal subunit protein uL1 (224 aa).

It belongs to the universal ribosomal protein uL1 family. In terms of assembly, part of the 50S ribosomal subunit.

In terms of biological role, binds directly to 23S rRNA. The L1 stalk is quite mobile in the ribosome, and is involved in E site tRNA release. Functionally, protein L1 is also a translational repressor protein, it controls the translation of the L11 operon by binding to its mRNA. The chain is Large ribosomal subunit protein uL1 from Borrelia hermsii (strain HS1 / DAH).